The primary structure comprises 106 residues: Large ribosomal subunit protein bL21 (106 aa).

This sequence belongs to the bacterial ribosomal protein bL21 family. As to quaternary structure, part of the 50S ribosomal subunit. Contacts protein L20.

Its function is as follows. This protein binds to 23S rRNA in the presence of protein L20. This chain is Large ribosomal subunit protein bL21, found in Xylella fastidiosa (strain 9a5c).